The primary structure comprises 104 residues: Cytochrome c6 (104 aa).

Positions 1–20 (MKSLLTFILTTIFCIQQVWA) are cleaved as a signal peptide. Heme c contacts are provided by C34, C37, H38, and M78.

It belongs to the cytochrome c family. PetJ subfamily. As to quaternary structure, monomer. In terms of processing, binds 1 heme c group covalently per subunit.

Its subcellular location is the plastid. The protein localises to the chloroplast thylakoid lumen. Functionally, functions as an electron carrier between membrane-bound cytochrome b6-f and photosystem I in oxygenic photosynthesis. In Cyanidioschyzon merolae (strain NIES-3377 / 10D) (Unicellular red alga), this protein is Cytochrome c6.